The sequence spans 234 residues: Large ribosomal subunit protein uL1 (234 aa).

This sequence belongs to the universal ribosomal protein uL1 family. In terms of assembly, part of the 50S ribosomal subunit.

In terms of biological role, binds directly to 23S rRNA. The L1 stalk is quite mobile in the ribosome, and is involved in E site tRNA release. Protein L1 is also a translational repressor protein, it controls the translation of the L11 operon by binding to its mRNA. The polypeptide is Large ribosomal subunit protein uL1 (Helicobacter acinonychis (strain Sheeba)).